A 383-amino-acid polypeptide reads, in one-letter code: Protein ctg-1 (383 aa).

The 175-residue stretch at 73–247 (PPECLEKYCG…YWGGNLVENG (175 aa)) folds into the CRAL-TRIO domain. The 110-residue stretch at 271–380 (KKAMADYDQL…AKQLRYNIEI (110 aa)) folds into the GOLD domain.

As to expression, highly expressed in cells of the pi uterine cell lineage.

Its subcellular location is the cytoplasm. It localises to the cytosol. In terms of biological role, vesicle trafficking protein. Functions in uterine cells to promote basement membrane (BM) mobility and BM gap formation during tissue remodeling. The sequence is that of Protein ctg-1 from Caenorhabditis elegans.